A 501-amino-acid chain; its full sequence is Mitogen-activated protein kinase MKC1 (501 aa).

The Protein kinase domain occupies 28–339; it reads FKIVKELGHG…VRDALNHKYL (312 aa). ATP is bound by residues 34-42 and Lys74; that span reads LGHGAYGIV. The active-site Proton acceptor is Asp174. Thr211 carries the post-translational modification Phosphothreonine. Positions 211–213 match the TXY motif; it reads TEY. Tyr213 is subject to Phosphotyrosine. Residues 400 to 450 form a disordered region; sequence MQKREEQRQEEEEKELLEQQRQFPAQESMDISQTPYNNLETNIGTPQVEDD. Positions 422 to 444 are enriched in polar residues; it reads FPAQESMDISQTPYNNLETNIGT.

It belongs to the protein kinase superfamily. CMGC Ser/Thr protein kinase family. MAP kinase subfamily. Mg(2+) is required as a cofactor. Post-translationally, dually phosphorylated on Thr-211 and Tyr-213, which activates the enzyme.

It catalyses the reaction L-seryl-[protein] + ATP = O-phospho-L-seryl-[protein] + ADP + H(+). It carries out the reaction L-threonyl-[protein] + ATP = O-phospho-L-threonyl-[protein] + ADP + H(+). Activated by tyrosine and threonine phosphorylation. This is Mitogen-activated protein kinase MKC1 (MKC1) from Candida albicans (Yeast).